Consider the following 226-residue polypeptide: ATP-dependent dethiobiotin synthetase BioD (226 aa).

Residue Glu12–Val17 participates in ATP binding. Thr16 provides a ligand contact to Mg(2+). Lys39 is an active-site residue. Thr43 is a binding site for substrate. ATP-binding positions include Asp47, Glu108–Gly111, Asn168–Cys169, and Pro200–Ile202. The Mg(2+) site is built by Asp47 and Glu108.

It belongs to the dethiobiotin synthetase family. Homodimer. The cofactor is Mg(2+).

It is found in the cytoplasm. The catalysed reaction is (7R,8S)-7,8-diammoniononanoate + CO2 + ATP = (4R,5S)-dethiobiotin + ADP + phosphate + 3 H(+). It catalyses the reaction (7R,8S)-8-amino-7-(carboxyamino)nonanoate + ATP = (4R,5S)-dethiobiotin + ADP + phosphate + H(+). Its pathway is cofactor biosynthesis; biotin biosynthesis; biotin from 7,8-diaminononanoate: step 1/2. Functionally, catalyzes a mechanistically unusual reaction, the ATP-dependent insertion of CO2 between the N7 and N8 nitrogen atoms of 7,8-diaminopelargonic acid (DAPA, also called 7,8-diammoniononanoate) to form a ureido ring. This cyanobacterium does not encode bioA (which catalyzes the formation of the precursor for this reaction in the cannonical pathway), instead it encodes bioU, which replaces bioA and also performs the first half of the cannonical BioD reaction. Thus in this organism BioD has a different substrate. The sequence is that of ATP-dependent dethiobiotin synthetase BioD from Gloeothece citriformis (strain PCC 7424) (Cyanothece sp. (strain PCC 7424)).